The following is a 331-amino-acid chain: Photosystem II assembly lipoprotein Ycf48 (331 aa).

The N-terminal stretch at 1–23 (MIPVIRSFLSLLLCVGLTFGLGG) is a signal peptide. C24 is lipidated: N-palmitoyl cysteine. C24 carries S-diacylglycerol cysteine lipidation.

It belongs to the Ycf48 family. In terms of assembly, part of early PSII assembly complexes which includes D1 (psbA) and PsbI; not found in mature PSII. Binds to the lumenal side of PSII complexes. Interacts with YidC.

The protein localises to the cellular thylakoid membrane. Functionally, a factor required for optimal assembly of photosystem II (PSII), acting in the early stages of PSII assembly. Also plays a role in replacement of photodamaged D1 (psbA). Assists YidC in synthesis of chlorophyll-binding proteins. The polypeptide is Photosystem II assembly lipoprotein Ycf48 (Synechococcus sp. (strain RCC307)).